The sequence spans 239 residues: Large ribosomal subunit protein eL32 (239 aa).

2 stretches are compositionally biased toward acidic residues: residues 1 to 12 (MSDENDTPEELA) and 67 to 91 (VEADTDAEVEEVGGDDEADTDADVE). 2 disordered regions span residues 1 to 23 (MSDENDTPEELADISGVGPSKAE) and 64 to 178 (GLEV…HPSG). A compositionally biased stretch (basic and acidic residues) spans 92-113 (TELRARGLTEKTPDLSEDEQRL). The segment covering 130–155 (YHKKKRTPTSWRRPKGTLSKQRRGIK) has biased composition (basic residues).

It belongs to the eukaryotic ribosomal protein eL32 family.

This Halobacterium salinarum (strain ATCC 700922 / JCM 11081 / NRC-1) (Halobacterium halobium) protein is Large ribosomal subunit protein eL32 (rpl32e).